The primary structure comprises 446 residues: B3 domain-containing protein REM12 (446 aa).

The disordered stretch occupies residues 1–46 (MVLNSSDLGPSRCDIRDLPAPSSTNDQGKTELARKKKVKRSNTEIE). DNA-binding regions (TF-B3) lie at residues 56–153 (CFVA…FCST) and 193–289 (FMTL…VNTQ). A disordered region spans residues 295–334 (SQQGECSRDSEKESSICAEPSRGNKKWKATNNRKERRDSS). The segment at residues 341–435 (YVTLTLTPED…TTPVFKFCSN (95 aa)) is a DNA-binding region (TF-B3 3).

The protein resides in the nucleus. The chain is B3 domain-containing protein REM12 (REM12) from Arabidopsis thaliana (Mouse-ear cress).